We begin with the raw amino-acid sequence, 419 residues long: Argininosuccinate synthase (419 aa).

9–17 (AYSGGLDTS) is an ATP binding site. An L-citrulline-binding site is contributed by Y87. G117 provides a ligand contact to ATP. Residues T119, N123, and D124 each coordinate L-aspartate. N123 serves as a coordination point for L-citrulline. The L-citrulline site is built by R127, S175, S184, E260, and Y272.

It belongs to the argininosuccinate synthase family. Type 1 subfamily. As to quaternary structure, homotetramer.

The protein resides in the cytoplasm. The catalysed reaction is L-citrulline + L-aspartate + ATP = 2-(N(omega)-L-arginino)succinate + AMP + diphosphate + H(+). It participates in amino-acid biosynthesis; L-arginine biosynthesis; L-arginine from L-ornithine and carbamoyl phosphate: step 2/3. The chain is Argininosuccinate synthase from Brevibacillus brevis (strain 47 / JCM 6285 / NBRC 100599).